The sequence spans 416 residues: Probable protein phosphatase 2C 49 (416 aa).

One can recognise a PPM-type phosphatase domain in the interval 91–411; sequence RYGVTSVFGR…DNVSVVVVDL (321 aa). Residues aspartate 131, glycine 132, and aspartate 319 each coordinate Mn(2+). A compositionally biased stretch (pro residues) spans 343–360; sequence PPSPPGCSRPKAVLPPPA. The tract at residues 343-368 is disordered; sequence PPSPPGCSRPKAVLPPPAGASGGGGG. Aspartate 402 contacts Mn(2+).

The protein belongs to the PP2C family. Requires Mg(2+) as cofactor. Mn(2+) is required as a cofactor.

The catalysed reaction is O-phospho-L-seryl-[protein] + H2O = L-seryl-[protein] + phosphate. The enzyme catalyses O-phospho-L-threonyl-[protein] + H2O = L-threonyl-[protein] + phosphate. This is Probable protein phosphatase 2C 49 from Oryza sativa subsp. japonica (Rice).